Consider the following 305-residue polypeptide: Methionyl-tRNA formyltransferase (305 aa).

109 to 112 serves as a coordination point for (6S)-5,6,7,8-tetrahydrofolate; that stretch reads SLLP.

Belongs to the Fmt family.

It catalyses the reaction L-methionyl-tRNA(fMet) + (6R)-10-formyltetrahydrofolate = N-formyl-L-methionyl-tRNA(fMet) + (6S)-5,6,7,8-tetrahydrofolate + H(+). Its function is as follows. Attaches a formyl group to the free amino group of methionyl-tRNA(fMet). The formyl group appears to play a dual role in the initiator identity of N-formylmethionyl-tRNA by promoting its recognition by IF2 and preventing the misappropriation of this tRNA by the elongation apparatus. In Paramagnetospirillum magneticum (strain ATCC 700264 / AMB-1) (Magnetospirillum magneticum), this protein is Methionyl-tRNA formyltransferase.